The primary structure comprises 677 residues: DNA ligase (677 aa).

NAD(+) contacts are provided by residues 38-42 (DSVYD), 87-88 (SL), and Glu-119. Lys-121 acts as the N6-AMP-lysine intermediate in catalysis. Residues Arg-142, Glu-179, Lys-296, and Lys-320 each contribute to the NAD(+) site. Zn(2+) contacts are provided by Cys-414, Cys-417, Cys-432, and Cys-438. The region spanning 595-677 (VVKSEIAGKT…LKLLKSKGVF (83 aa)) is the BRCT domain.

This sequence belongs to the NAD-dependent DNA ligase family. LigA subfamily. Requires Mg(2+) as cofactor. Mn(2+) serves as cofactor.

It catalyses the reaction NAD(+) + (deoxyribonucleotide)n-3'-hydroxyl + 5'-phospho-(deoxyribonucleotide)m = (deoxyribonucleotide)n+m + AMP + beta-nicotinamide D-nucleotide.. Its function is as follows. DNA ligase that catalyzes the formation of phosphodiester linkages between 5'-phosphoryl and 3'-hydroxyl groups in double-stranded DNA using NAD as a coenzyme and as the energy source for the reaction. It is essential for DNA replication and repair of damaged DNA. The sequence is that of DNA ligase from Coxiella burnetii (strain CbuG_Q212) (Coxiella burnetii (strain Q212)).